The primary structure comprises 459 residues: Exodeoxyribonuclease 7 large subunit (459 aa).

This sequence belongs to the XseA family. As to quaternary structure, heterooligomer composed of large and small subunits.

The protein resides in the cytoplasm. The catalysed reaction is Exonucleolytic cleavage in either 5'- to 3'- or 3'- to 5'-direction to yield nucleoside 5'-phosphates.. In terms of biological role, bidirectionally degrades single-stranded DNA into large acid-insoluble oligonucleotides, which are then degraded further into small acid-soluble oligonucleotides. This Yersinia pestis bv. Antiqua (strain Antiqua) protein is Exodeoxyribonuclease 7 large subunit.